The chain runs to 365 residues: Spermidine/putrescine import ATP-binding protein PotA (365 aa).

An ABC transporter domain is found at 9-239 (IRLTNVTKSY…PINHFVANFI (231 aa)). 41-48 (GPSGCGKT) contacts ATP.

This sequence belongs to the ABC transporter superfamily. Spermidine/putrescine importer (TC 3.A.1.11.1) family. As to quaternary structure, the complex is composed of two ATP-binding proteins (PotA), two transmembrane proteins (PotB and PotC) and a solute-binding protein (PotD).

The protein localises to the cell membrane. The catalysed reaction is ATP + H2O + polyamine-[polyamine-binding protein]Side 1 = ADP + phosphate + polyamineSide 2 + [polyamine-binding protein]Side 1.. Functionally, part of the ABC transporter complex PotABCD involved in spermidine/putrescine import. Responsible for energy coupling to the transport system. The protein is Spermidine/putrescine import ATP-binding protein PotA of Lactiplantibacillus plantarum (strain ATCC BAA-793 / NCIMB 8826 / WCFS1) (Lactobacillus plantarum).